Here is a 381-residue protein sequence, read N- to C-terminus: Sulfate adenylyltransferase (381 aa).

The protein belongs to the sulfate adenylyltransferase family.

The catalysed reaction is sulfate + ATP + H(+) = adenosine 5'-phosphosulfate + diphosphate. It participates in sulfur metabolism; hydrogen sulfide biosynthesis; sulfite from sulfate: step 1/3. This is Sulfate adenylyltransferase from Chloroflexus aurantiacus (strain ATCC 29366 / DSM 635 / J-10-fl).